We begin with the raw amino-acid sequence, 308 residues long: Oligopeptide transport system permease protein AmiD (308 aa).

A run of 6 helical transmembrane segments spans residues 43–63 (TVVM…YPMF), 111–131 (ILIS…VGGI), 145–167 (VYNV…SIGA), 171–193 (NLIF…VQIL), 234–254 (MLPS…GLPI), and 274–294 (AYLF…LFVV). Residues 107–295 (ARNSILISVI…LVSLSLFVVG (189 aa)) form the ABC transmembrane type-1 domain.

The protein belongs to the binding-protein-dependent transport system permease family. OppBC subfamily.

It is found in the cell membrane. Functionally, part of the binding-protein-dependent transport system for oligopeptides; probably responsible for the translocation of the substrate across the membrane. This Streptococcus pneumoniae (strain ATCC BAA-255 / R6) protein is Oligopeptide transport system permease protein AmiD (amiD).